Consider the following 128-residue polypeptide: uncharacterized protein (128 aa).

The region spanning 5-128 is the VOC domain; it reads SIHHIAIICS…DQLPLELYEQ (124 aa). The a divalent metal cation site is built by His8, Glu56, His77, and Glu124.

This is an uncharacterized protein from Bacillus subtilis (strain 168).